A 292-amino-acid polypeptide reads, in one-letter code: Probable septum site-determining protein MinC (292 aa).

A disordered region spans residues 109–188; that stretch reads QVIDTAPPND…PQSSSALVIT (80 aa). Acidic residues predominate over residues 140–150; sequence QDDEADGEQAD. A compositionally biased stretch (polar residues) spans 171-185; the sequence is ANRPTATPPQSSSAL.

Belongs to the MinC family. Interacts with MinD and FtsZ.

Functionally, cell division inhibitor that blocks the formation of polar Z ring septums. Rapidly oscillates between the poles of the cell to destabilize FtsZ filaments that have formed before they mature into polar Z rings. Prevents FtsZ polymerization. This chain is Probable septum site-determining protein MinC, found in Bordetella pertussis (strain Tohama I / ATCC BAA-589 / NCTC 13251).